A 553-amino-acid polypeptide reads, in one-letter code: Protein spartin (553 aa).

The region spanning 15-96 is the MIT domain; the sequence is IRTAYKAAMT…ETELRYRLKV (82 aa). Positions 105–130 are disordered; it reads DDSAVEATEESRAEMDTKRPPLLAEN. Positions 113 to 123 are enriched in basic and acidic residues; the sequence is EESRAEMDTKR. A Senescence domain is found at 325–509; it reads IVSAADFIAS…SQNVNYITPK (185 aa).

In terms of assembly, interacts with Eps-15 (via C-terminal region); the interaction is required for spartin localization to the NMJ presynaptic membrane. Expressed in larval brain, ventral nerve cord and neuropil (at protein level).

It is found in the presynaptic cell membrane. The protein resides in the early endosome. It localises to the lipid droplet. Its function is as follows. During postembryonic development, functions with endocytic adapter Eps-15 in neurons to restrain synaptic growth, by inhibiting BMP signaling, and to control synaptic endocytosis. Required presynaptically for neuromuscular junction (NMJ) neurotransmission. Inhibits neuronal BMP signaling by promoting endocytic internalization and subsequent endosomal trafficking of the BMP receptor wit. In this way, regulates the Fmr1 translational regulator controlling Futsch expression to modulate neuronal microtubule stability, which controls both synaptogenesis and neuronal survival. The sequence is that of Protein spartin from Drosophila melanogaster (Fruit fly).